The chain runs to 284 residues: Urease accessory protein UreD (284 aa).

It belongs to the UreD family. In terms of assembly, ureD, UreF and UreG form a complex that acts as a GTP-hydrolysis-dependent molecular chaperone, activating the urease apoprotein by helping to assemble the nickel containing metallocenter of UreC. The UreE protein probably delivers the nickel.

It localises to the cytoplasm. In terms of biological role, required for maturation of urease via the functional incorporation of the urease nickel metallocenter. The chain is Urease accessory protein UreD from Bordetella bronchiseptica (strain ATCC BAA-588 / NCTC 13252 / RB50) (Alcaligenes bronchisepticus).